Reading from the N-terminus, the 416-residue chain is MKIPEKPIFLIFVSLILASSLTFTATAKSTIEPCSSNDTCNALLGYTLYTDLKVSEVASLFQVDPISILLANAIDISYPDVENHILPSKLFLKIPITCSCVDGIRKSVSTHYKTRPSDNLGSIADSVYGGLVSAEQIQEANSVNDPSLLDVGTSLVIPLPCACFNGTDNSLPAVYLSYVVKEIDTLVGIARRYSTTITDLMNVNAMGAPDVSSGDILAVPLSACASKFPRYASDFGLIVPNGSYALAAGHCVQCSCALGSRNLYCEPASLAVSCSSMQCRNSNLMLGNITVQQTSAGCNVTTCDYNGIANGTILTMLTRSLQPRCPGPQQFAPLLAPPDTVPRDVMYAPAPSPDFDGPGSIASSPRSSMLPGGGILPGNPANGPAGSISTASASSVSYFFITFLISIASFSLALSS.

Positions 1-27 are cleaved as a signal peptide; that stretch reads MKIPEKPIFLIFVSLILASSLTFTATA. 4 disulfides stabilise this stretch: C34-C100, C40-C163, C98-C161, and C100-C163. An N-linked (GlcNAc...) asparagine glycan is attached at N37. The LysM 1 domain occupies 110–157; the sequence is THYKTRPSDNLGSIADSVYGGLVSAEQIQEANSVNDPSLLDVGTSLVI. N165 carries N-linked (GlcNAc...) asparagine glycosylation. The LysM 2 domain maps to 176-219; that stretch reads LSYVVKEIDTLVGIARRYSTTITDLMNVNAMGAPDVSSGDILAV. Cystine bridges form between C224–C256 and C251–C279. N-linked (GlcNAc...) asparagine glycosylation is present at N241. Residues N288, N299, and N310 are each glycosylated (N-linked (GlcNAc...) asparagine). The segment at 356–376 is disordered; that stretch reads DGPGSIASSPRSSMLPGGGIL. A391 carries the GPI-anchor amidated alanine lipid modification. The propeptide at 392-416 is removed in mature form; the sequence is SASSVSYFFITFLISIASFSLALSS.

Interacts with peptidoglycans.

The protein localises to the cell membrane. The protein resides in the secreted. Its function is as follows. Required as a cell surface receptor for peptidoglycan (PGN) elicitor signaling leading to innate immunity. Plays an essential role in detecting PGNs and restricting bacterial growth (of Pseudomonas syringae pv. tomato DC3000 for example). The polypeptide is LysM domain-containing GPI-anchored protein 1 (LYM1) (Arabidopsis thaliana (Mouse-ear cress)).